The primary structure comprises 371 residues: Glutamate 5-kinase (371 aa).

Lys-14 is an ATP binding site. Positions 54, 141, and 153 each coordinate substrate. 173–174 (TD) lines the ATP pocket. One can recognise a PUA domain in the interval 280–357 (AGSLIVDAGA…SDIEQLLGYI (78 aa)).

Belongs to the glutamate 5-kinase family.

It localises to the cytoplasm. It carries out the reaction L-glutamate + ATP = L-glutamyl 5-phosphate + ADP. The protein operates within amino-acid biosynthesis; L-proline biosynthesis; L-glutamate 5-semialdehyde from L-glutamate: step 1/2. Its function is as follows. Catalyzes the transfer of a phosphate group to glutamate to form L-glutamate 5-phosphate. This Azoarcus sp. (strain BH72) protein is Glutamate 5-kinase.